The following is a 119-amino-acid chain: Large ribosomal subunit protein bL20c (119 aa).

This sequence belongs to the bacterial ribosomal protein bL20 family.

It is found in the plastid. It localises to the chloroplast. Functionally, binds directly to 23S ribosomal RNA and is necessary for the in vitro assembly process of the 50S ribosomal subunit. It is not involved in the protein synthesizing functions of that subunit. The protein is Large ribosomal subunit protein bL20c (rpl20) of Pinus thunbergii (Japanese black pine).